The following is a 304-amino-acid chain: Ribosomal RNA small subunit methyltransferase H (304 aa).

Residues 47–49 (GGH), D66, F93, D108, and Q115 contribute to the S-adenosyl-L-methionine site.

The protein belongs to the methyltransferase superfamily. RsmH family.

Its subcellular location is the cytoplasm. The catalysed reaction is cytidine(1402) in 16S rRNA + S-adenosyl-L-methionine = N(4)-methylcytidine(1402) in 16S rRNA + S-adenosyl-L-homocysteine + H(+). Specifically methylates the N4 position of cytidine in position 1402 (C1402) of 16S rRNA. In Prochlorococcus marinus (strain NATL1A), this protein is Ribosomal RNA small subunit methyltransferase H.